Here is a 71-residue protein sequence, read N- to C-terminus: Disintegrin tzabcanin (71 aa).

Residues 1 to 71 enclose the Disintegrin domain; the sequence is GEECDCGSPA…ADCPRNHFHA (71 aa). Cystine bridges form between cysteine 4-cysteine 19, cysteine 6-cysteine 14, cysteine 13-cysteine 36, cysteine 27-cysteine 33, cysteine 32-cysteine 57, and cysteine 45-cysteine 64. Residues 49-51 carry the Cell attachment site motif; sequence RGD.

It belongs to the venom metalloproteinase (M12B) family. P-II subfamily. P-IIa sub-subfamily. As to expression, expressed by the venom gland.

It is found in the secreted. In terms of biological role, inhibits fibrinogen interaction with platelets. Acts by binding to alpha-IIb/beta-3 (ITGA2B/ITGB3) on the platelet surface and inhibits aggregation induced by ADP, thrombin, platelet-activating factor and collagen. Inhibits cell adhesion to vitronectin, probably by blocking its receptor integrin alpha-V/beta-3 (ITGAV/ITGB3), and to fibronectin in vitro. Shows little to no cytotoxicity in vitro. This chain is Disintegrin tzabcanin, found in Crotalus tzabcan (Yucatan neotropical rattlesnake).